A 185-amino-acid polypeptide reads, in one-letter code: UPF0397 protein CPF_1836 (185 aa).

Helical transmembrane passes span 11-31 (IVAIGIGSAVFMILGRFGSLP), 44-64 (AFLALMALLYGPLAGFLIGFI), 71-91 (IVFFGSPWISWVFASGIVGLI), 111-131 (IFMFNLIQIIANGVAWFLVAP), and 149-169 (GVIGGISNMVTVGVLGTILIA).

The protein belongs to the UPF0397 family.

The protein resides in the cell membrane. In Clostridium perfringens (strain ATCC 13124 / DSM 756 / JCM 1290 / NCIMB 6125 / NCTC 8237 / Type A), this protein is UPF0397 protein CPF_1836.